Reading from the N-terminus, the 454-residue chain is Allantoinase (454 aa).

His-59, His-61, Lys-150, His-190, His-246, and Asp-319 together coordinate Zn(2+). An N6-carboxylysine modification is found at Lys-150.

Belongs to the metallo-dependent hydrolases superfamily. Allantoinase family. Homotetramer. It depends on Zn(2+) as a cofactor. Post-translationally, carboxylation allows a single lysine to coordinate two zinc ions.

The catalysed reaction is (S)-allantoin + H2O = allantoate + H(+). The protein operates within nitrogen metabolism; (S)-allantoin degradation; allantoate from (S)-allantoin: step 1/1. Its function is as follows. Catalyzes the conversion of allantoin (5-ureidohydantoin) to allantoic acid by hydrolytic cleavage of the five-member hydantoin ring. The chain is Allantoinase from Bacillus licheniformis (strain ATCC 14580 / DSM 13 / JCM 2505 / CCUG 7422 / NBRC 12200 / NCIMB 9375 / NCTC 10341 / NRRL NRS-1264 / Gibson 46).